Here is a 96-residue protein sequence, read N- to C-terminus: Neutrophil defensin 1 (96 aa).

The N-terminal stretch at 1-19 (MRTLVILAAILLVALQAQA) is a signal peptide. The propeptide occupies 20–66 (EPLQARTDEATAAQEQIPTDNPEVVVSLAWDESLAPKDSVPGLRKNM). Disulfide bonds link C68-C96, C70-C85, and C75-C95. Residue Y87 is modified to Phosphotyrosine.

As to quaternary structure, tetramer. Dimer. Interacts with RETN. In terms of processing, ADP-ribosylation drastically reduces cytotoxic and antibacterial activities, and enhances IL8 production.

Its subcellular location is the secreted. Functionally, effector molecule of the innate immune system that acts via antibiotic-like properties against a broad array of infectious agents including bacteria, fungi, and viruses or by promoting the activation and maturation of some APCs. Interacts with the essential precursor of cell wall synthesis lipid II to inhibit bacterial cell wall synthesis. Inhibits adenovirus infection via inhibition of viral disassembly at the vertex region, thereby restricting the release of internal capsid protein pVI, which is required for endosomal membrane penetration during cell entry. In addition, interaction with adenovirus capsid leads to the redirection of viral particles to TLR4 thereby promoting a NLRP3-mediated inflammasome response and interleukin 1-beta (IL-1beta) release. Induces the production of proinflammatory cytokines including type I interferon (IFN) in plasmacytoid dendritic cells (pDCs) by triggering the degradation of NFKBIA and nuclear translocation of IRF1, both of which are required for activation of pDCs. This chain is Neutrophil defensin 1, found in Macaca mulatta (Rhesus macaque).